Consider the following 622-residue polypeptide: Probable potassium transport system protein Kup (622 aa).

Transmembrane regions (helical) follow at residues 8-28 (LAAL…TSVL), 50-70 (VLSI…VVLV), 103-123 (LGIG…TPAI), 137-157 (PHFG…LFAV), 169-189 (FGPV…PHIV), 215-235 (FIIL…YADL), 247-267 (WFSV…ALLL), 285-305 (ALIP…QALI), 337-357 (IYIP…VVMF), 366-386 (AYGI…FFVI), 393-413 (PLAL…AFFG), and 419-439 (LLQG…LMMT).

This sequence belongs to the HAK/KUP transporter (TC 2.A.72) family.

The protein resides in the cell inner membrane. It catalyses the reaction K(+)(in) + H(+)(in) = K(+)(out) + H(+)(out). Its function is as follows. Transport of potassium into the cell. Likely operates as a K(+):H(+) symporter. The polypeptide is Probable potassium transport system protein Kup (Paracidovorax citrulli (strain AAC00-1) (Acidovorax citrulli)).